The sequence spans 244 residues: Large ribosomal subunit protein uL2 (244 aa).

Composition is skewed to basic residues over residues 1–12 (MGKRPLVRRRGR) and 234–244 (KTGRARIKERK). 2 disordered regions span residues 1 to 30 (MGKRPLVRRRGRGGNQFRSTSTGKVGTKAN) and 203 to 244 (HGGG…KERK).

This sequence belongs to the universal ribosomal protein uL2 family. As to quaternary structure, part of the 50S ribosomal subunit. Forms a bridge to the 30S subunit in the 70S ribosome.

Its function is as follows. One of the primary rRNA binding proteins. Required for association of the 30S and 50S subunits to form the 70S ribosome, for tRNA binding and peptide bond formation. It has been suggested to have peptidyltransferase activity; this is somewhat controversial. Makes several contacts with the 16S rRNA in the 70S ribosome. This Nitrosopumilus maritimus (strain SCM1) protein is Large ribosomal subunit protein uL2.